We begin with the raw amino-acid sequence, 170 residues long: Myosin regulatory light chain 1 (170 aa).

Residues 1–13 (MSKAAKKKSSKKR) show a composition bias toward basic residues. The tract at residues 1 to 22 (MSKAAKKKSSKKRSGSEAAQFD) is disordered. EF-hand domains follow at residues 24–59 (KTIQEFKEAFGIMDQNKDGIIDKSDLKDLYASMGQI) and 93–128 (DPEATIIGAFAMFDKKDCGKIKEDDLIKILQNKRGE). Residues D37, N39, D41, and D48 each contribute to the Ca(2+) site.

In terms of assembly, myosin is a hexamer of 2 heavy chains and 4 light chains (two regulatory light chains and two essential light chains).

The protein is Myosin regulatory light chain 1 (mlc-1) of Caenorhabditis elegans.